Consider the following 341-residue polypeptide: Adenosine deaminase (341 aa).

The Zn(2+) site is built by His15 and His17. Substrate is bound by residues His17, Asp19, and Gly172. His199 contributes to the Zn(2+) binding site. Glu202 acts as the Proton donor in catalysis. A Zn(2+)-binding site is contributed by Asp279.

Belongs to the metallo-dependent hydrolases superfamily. Adenosine and AMP deaminases family. Adenosine deaminase subfamily. Zn(2+) serves as cofactor.

It catalyses the reaction adenosine + H2O + H(+) = inosine + NH4(+). The enzyme catalyses 2'-deoxyadenosine + H2O + H(+) = 2'-deoxyinosine + NH4(+). Its function is as follows. Catalyzes the hydrolytic deamination of adenosine and 2-deoxyadenosine. The sequence is that of Adenosine deaminase from Streptococcus equi subsp. zooepidemicus (strain MGCS10565).